The sequence spans 293 residues: Cyclohexadienyl dehydrogenase (293 aa).

The Prephenate/arogenate dehydrogenase domain occupies Lys5–Pro293. His6 to Val30 provides a ligand contact to NAD(+).

The protein belongs to the prephenate/arogenate dehydrogenase family. Homodimer.

It catalyses the reaction L-arogenate + NAD(+) = L-tyrosine + CO2 + NADH. It carries out the reaction prephenate + NAD(+) = 3-(4-hydroxyphenyl)pyruvate + CO2 + NADH. The protein operates within amino-acid biosynthesis; L-tyrosine biosynthesis; (4-hydroxyphenyl)pyruvate from prephenate (NAD(+) route): step 1/1. It functions in the pathway amino-acid biosynthesis; L-tyrosine biosynthesis; L-tyrosine from L-arogenate (NAD(+) route): step 1/1. Its activity is regulated as follows. Insensitive to feedback inhibition by L-tyrosine. Its function is as follows. Can function as either prephenate dehydrogenase or as arogenate dehydrogenase in the biosynthesis of L-tyrosine. Catalyzes two analogous reactions: converts prephenate to 4-hydroxyphenylpyruvate and transforms L-arogenate to L-tyrosine. Is not able to utilize NADP(+) instead of NAD(+) as cosubstrate. The chain is Cyclohexadienyl dehydrogenase from Zymomonas mobilis subsp. mobilis (strain ATCC 31821 / ZM4 / CP4).